We begin with the raw amino-acid sequence, 795 residues long: Protein espinas (795 aa).

The segment at 30–96 (GTGLTFPPHR…FVSPLQRRHC (67 aa)) is disordered. Residues 52–66 (ASMSSNVASTATSSN) show a composition bias toward low complexity. In terms of domain architecture, PET spans 135–243 (LDFQRNSQSD…AVRLLSDERP (109 aa)). LIM zinc-binding domains lie at 242–306 (RPCK…ETQK), 307–367 (PRCS…MFAE), and 368–430 (YCDY…GEPP). 2 disordered regions span residues 427–487 (GEPP…GSAG) and 616–684 (NRNT…EMQI). Composition is skewed to basic and acidic residues over residues 459–471 (RSGD…ESSR) and 637–649 (LDNR…RFHS). A compositionally biased stretch (polar residues) spans 650-662 (VQDTMSRSKSYTD). Basic residues predominate over residues 666–675 (ARRRRRRRNQ).

Belongs to the prickle / espinas / testin family.

This chain is Protein espinas, found in Drosophila pseudoobscura pseudoobscura (Fruit fly).